An 89-amino-acid polypeptide reads, in one-letter code: Large ribosomal subunit protein bL27 (89 aa).

Positions 1-21 (MAHKKSGGSSRNGRDSNPKYL) are disordered.

This sequence belongs to the bacterial ribosomal protein bL27 family.

The polypeptide is Large ribosomal subunit protein bL27 (Hyphomonas neptunium (strain ATCC 15444)).